A 350-amino-acid polypeptide reads, in one-letter code: Ferredoxin--NADP reductase (350 aa).

FAD contacts are provided by Thr14, Asp33, Gln41, Tyr46, Ala86, Phe121, Asp286, and Thr327.

This sequence belongs to the ferredoxin--NADP reductase type 2 family. Homodimer. FAD serves as cofactor.

The enzyme catalyses 2 reduced [2Fe-2S]-[ferredoxin] + NADP(+) + H(+) = 2 oxidized [2Fe-2S]-[ferredoxin] + NADPH. The chain is Ferredoxin--NADP reductase from Flavobacterium johnsoniae (strain ATCC 17061 / DSM 2064 / JCM 8514 / BCRC 14874 / CCUG 350202 / NBRC 14942 / NCIMB 11054 / UW101) (Cytophaga johnsonae).